A 214-amino-acid chain; its full sequence is MKLIKICVLKNSIFRDTFYSLFDIIYPRSENSLIFANQLRRILLGKSEGLRFLKISGFIANKNSKFSVYQKINEFSEFEEINESVFQLFLNIKNIDLYYRSCDANKRFFGTLEAYYPKTYSQDDIILSKNIKLIKKNQHIFSLSSLKLKMKFILEAKKGIGSFFTPVKRVNYIIEENKLSFSRVVLELETDKRRGCFSSTIDAFKVLNFFALNM.

This sequence belongs to the RNA polymerase alpha chain family. As to quaternary structure, in plastids the minimal PEP RNA polymerase catalytic core is composed of four subunits: alpha, beta, beta', and beta''. When a (nuclear-encoded) sigma factor is associated with the core the holoenzyme is formed, which can initiate transcription.

It is found in the plastid. It localises to the chloroplast. It catalyses the reaction RNA(n) + a ribonucleoside 5'-triphosphate = RNA(n+1) + diphosphate. DNA-dependent RNA polymerase catalyzes the transcription of DNA into RNA using the four ribonucleoside triphosphates as substrates. The chain is DNA-directed RNA polymerase subunit alpha (rpoA) from Euglena viridis (Cercaria viridis).